The following is a 381-amino-acid chain: MSQFNNSPVLALAKDLISRPSVTPLDEGCQTLMADRLKDAGFNIEDMVFEDTTNMWARKGTQSPVFCFAGHTDVVPVGDLNRWHTPPFEPVVIDDYLHGRGAADMKGSLAAMVVATERFVKKHPDHKGSIAFLITSDEEGPFINGTTRVIDTLEARNEKITWSLVGEPSSTHKLGDIVKNGRRGSLTGNLTVKGMQGHVAYPHLADNPIHKASPALDELARMKWDNGNEFFPPTSFQIANINGGTGASNVIPGTLEVMFNFRYSTEVTAEILIERVLNILDAHGLDYDINWIFNGLPFLTGDGPLLDATRDAIKKVTGLDTDPQTSGGTSDGRFIAPTGAHVLELGPVNATIHKVNECVKVSDLEQLTLCYEAILENLLCQ.

Histidine 71 contributes to the Zn(2+) binding site. Aspartate 73 is an active-site residue. Aspartate 104 lines the Zn(2+) pocket. Glutamate 138 serves as the catalytic Proton acceptor. The Zn(2+) site is built by glutamate 139, glutamate 167, and histidine 353.

It belongs to the peptidase M20A family. DapE subfamily. Homodimer. The cofactor is Zn(2+). Co(2+) serves as cofactor.

It carries out the reaction N-succinyl-(2S,6S)-2,6-diaminopimelate + H2O = (2S,6S)-2,6-diaminopimelate + succinate. It participates in amino-acid biosynthesis; L-lysine biosynthesis via DAP pathway; LL-2,6-diaminopimelate from (S)-tetrahydrodipicolinate (succinylase route): step 3/3. In terms of biological role, catalyzes the hydrolysis of N-succinyl-L,L-diaminopimelic acid (SDAP), forming succinate and LL-2,6-diaminopimelate (DAP), an intermediate involved in the bacterial biosynthesis of lysine and meso-diaminopimelic acid, an essential component of bacterial cell walls. The sequence is that of Succinyl-diaminopimelate desuccinylase from Shewanella piezotolerans (strain WP3 / JCM 13877).